The sequence spans 537 residues: Cytochrome P450 monooxygenase ltmQ (537 aa).

The chain crosses the membrane as a helical span at residues 10–30 (FPKLNFATIVISGATIIGIIF). Residues Asn-182, Asn-188, and Asn-310 are each glycosylated (N-linked (GlcNAc...) asparagine). Cys-476 contacts heme.

The protein belongs to the cytochrome P450 family. Heme serves as cofactor.

It is found in the membrane. The protein operates within secondary metabolite biosynthesis. In terms of biological role, cytochrome P450 monooxygenase; part of the gene clusters that mediates the biosynthesis of lolitrems, indole-diterpene mycotoxins that are potent tremorgens in mammals, and are synthesized by clavicipitaceous fungal endophytes in association with their grass hosts. The geranylgeranyl diphosphate (GGPP) synthase ltmG is proposed to catalyze the first step in lolitrem biosynthesis. LtmG catalyzes a series of iterative condensations of isopentenyl diphosphate (IPP) with dimethylallyl diphosphate (DMAPP), geranyl diphosphate (GPP), and farnesyl diphosphate (FPP), to form GGPP. GGPP then condenses with indole-3-glycerol phosphate to form 3-geranylgeranylindole, an acyclic intermediate, to be incorporated into paxilline. Either ltmG or ltmC could be responsible for this step, as both are putative prenyl transferases. The FAD-dependent monooxygenase ltmM then catalyzes the epoxidation of the two terminal alkenes of the geranylgeranyl moiety, which is subsequently cyclized by ltmB, to paspaline. The cytochrome P450 monooxygenases ltmQ and ltmP can sequentially oxidize paspaline to terpendole E and terpendole F. Alternatively, ltmP converts paspaline to an intermediate which is oxidized by ltmQ to terpendole F. LtmF, ltmK, ltmE and ltmJ appear to be unique to the epichloe endophytes. The prenyltransferase ltmF is involved in the 27-hydroxyl-O-prenylation. The cytochrome P450 monooxygenase ltmK is required for the oxidative acetal ring formation. The multi-functional prenyltransferase ltmE is required for C20- and C21-prenylations of the indole ring of paspalanes and acts together with the cytochrome P450 monooxygenase ltmJ to yield lolitremanes by multiple oxidations and ring closures. The stereoisomer pairs of lolitriol and lolitrem N or lolitrem B and lolitrem F may be attributed to variations in the way in which ring closure can occur under the action of ltmJ. While the major product of this pathway is lolitrem B, the prenyl transferases and cytochrome P450 monooxygenases identified in this pathway have a remarkable versatility in their regio- and stereo-specificities to generate a diverse range of metabolites that are products of a metabolic grid rather than a linear pathway. This chain is Cytochrome P450 monooxygenase ltmQ, found in Epichloe festucae var. lolii (Neotyphodium lolii).